Reading from the N-terminus, the 156-residue chain is Ribonuclease H (156 aa).

The RNase H type-1 domain maps to 3–144 (ELKLIHIFTD…CDVLARTAAE (142 aa)). Residues Asp12, Glu50, Asp72, and Asp136 each coordinate Mg(2+).

This sequence belongs to the RNase H family. In terms of assembly, monomer. Requires Mg(2+) as cofactor.

It localises to the cytoplasm. The catalysed reaction is Endonucleolytic cleavage to 5'-phosphomonoester.. In terms of biological role, endonuclease that specifically degrades the RNA of RNA-DNA hybrids. This Shewanella baltica (strain OS223) protein is Ribonuclease H.